The chain runs to 302 residues: UDP-N-acetylenolpyruvoylglucosamine reductase (302 aa).

In terms of domain architecture, FAD-binding PCMH-type spans 31–196 (KIGGPADVLA…LRAWISLERG (166 aa)). The active site involves arginine 175. Serine 225 (proton donor) is an active-site residue. Glutamate 295 is a catalytic residue.

This sequence belongs to the MurB family. The cofactor is FAD.

The protein localises to the cytoplasm. It catalyses the reaction UDP-N-acetyl-alpha-D-muramate + NADP(+) = UDP-N-acetyl-3-O-(1-carboxyvinyl)-alpha-D-glucosamine + NADPH + H(+). The protein operates within cell wall biogenesis; peptidoglycan biosynthesis. Cell wall formation. In Caldanaerobacter subterraneus subsp. tengcongensis (strain DSM 15242 / JCM 11007 / NBRC 100824 / MB4) (Thermoanaerobacter tengcongensis), this protein is UDP-N-acetylenolpyruvoylglucosamine reductase.